The chain runs to 277 residues: Putative serine/threonine-protein kinase PRKY (277 aa).

Residues 1–12 (MEAPGPAQAAAA) show a composition bias toward low complexity. The interval 1–40 (MEAPGPAQAAAAESNSREVTEDAADWAPALCPSPEARSPE) is disordered. One can recognise a Protein kinase domain in the interval 49 to 277 (CDALVTMGTG…DFHVKTGRMM (229 aa)). ATP contacts are provided by residues 55–63 (MGTGTFGRV) and Lys-78. Asp-172 (proton acceptor) is an active-site residue. Thr-203 is modified (phosphothreonine).

The protein belongs to the protein kinase superfamily. AGC Ser/Thr protein kinase family. cAMP subfamily. As to expression, ubiquitous.

The catalysed reaction is L-seryl-[protein] + ATP = O-phospho-L-seryl-[protein] + ADP + H(+). It carries out the reaction L-threonyl-[protein] + ATP = O-phospho-L-threonyl-[protein] + ADP + H(+). The chain is Putative serine/threonine-protein kinase PRKY (PRKY) from Homo sapiens (Human).